Here is a 563-residue protein sequence, read N- to C-terminus: Arginine--tRNA ligase (563 aa).

Positions 121-131 (PNIAKPFSIGH) match the 'HIGH' region motif.

This sequence belongs to the class-I aminoacyl-tRNA synthetase family. As to quaternary structure, monomer.

The protein resides in the cytoplasm. The enzyme catalyses tRNA(Arg) + L-arginine + ATP = L-arginyl-tRNA(Arg) + AMP + diphosphate. The chain is Arginine--tRNA ligase from Streptococcus thermophilus (strain ATCC BAA-250 / LMG 18311).